Reading from the N-terminus, the 221-residue chain is PKHD-type hydroxylase PMT9312_1262 (221 aa).

A Fe2OG dioxygenase domain is found at 80–174; sequence IIHGIMFTKS…RLVCVGWIES (95 aa). 3 residues coordinate Fe cation: histidine 98, aspartate 100, and histidine 155. Arginine 165 provides a ligand contact to 2-oxoglutarate.

It depends on Fe(2+) as a cofactor. The cofactor is L-ascorbate.

This is PKHD-type hydroxylase PMT9312_1262 from Prochlorococcus marinus (strain MIT 9312).